We begin with the raw amino-acid sequence, 151 residues long: Ribonuclease H (151 aa).

In terms of domain architecture, RNase H type-1 spans 1 to 141 (MKHVDIFTDG…ADELARRGME (141 aa)). 4 residues coordinate Mg(2+): Asp-9, Glu-47, Asp-69, and Asp-133.

It belongs to the RNase H family. In terms of assembly, monomer. Requires Mg(2+) as cofactor.

The protein localises to the cytoplasm. The catalysed reaction is Endonucleolytic cleavage to 5'-phosphomonoester.. Its function is as follows. Endonuclease that specifically degrades the RNA of RNA-DNA hybrids. The polypeptide is Ribonuclease H (Rhizobium etli (strain ATCC 51251 / DSM 11541 / JCM 21823 / NBRC 15573 / CFN 42)).